Here is a 589-residue protein sequence, read N- to C-terminus: MSLSNLGPGGVHSPLWRWVVERVWRLEHAFERSRAAARPEDDTRIRIFLVMGFFGFCFVGVSLGAGWSALFSRAGQGGGYAQGVEGARGDVVDRNGKLLAVDLAHYALYVDPREVWDAKETRAALGRALPQVPAKRLDKAVFGDHRAFVLGGLTPDEKDAIFNLGLPGVTFEEQERRMYPLGPTAAHLIGFVDSGGKGLAGAERALDDPIRKAAGGEGGPAQLSIDVRVQAALEDELRKAAEEFTPKGAVGLVTNVHTGEILGMASWPDYDANKAGGATDDQRLNRAAASVYEMGSTFKAFTVAIGLDTGVATAASTFDAREPYKLGYRTIHDYHATKAVLNLVEVFQHSSNIGTAMLAERVGGQRLSQYFTNLGLTKPAKVELQESARPLTPRKWDQDTVASTSFGHGMNISPLALAQAMNALLNGGEMRPLTIRKLPPGVRPEGRRVLSEHTSAEMLKIMRANVVPGEGGSGGKADVPGLSVGGKTGTGEKYDPAIRRYNHQRQVSSFAATFPTDGPLEADRYFVLILLDEPKGNANSFGFSTGGWVAAPAAGRVIERIAPFLGVKRKTELVTIANSPKNAAPEAGL.

A helical transmembrane segment spans residues 47-67 (IFLVMGFFGFCFVGVSLGAGW). Ser296 acts as the Acyl-ester intermediate in catalysis.

This sequence belongs to the transpeptidase family. Interacts with FtsN and FtsW.

It is found in the cell inner membrane. It catalyses the reaction Preferential cleavage: (Ac)2-L-Lys-D-Ala-|-D-Ala. Also transpeptidation of peptidyl-alanyl moieties that are N-acyl substituents of D-alanine.. The protein operates within cell wall biogenesis; peptidoglycan biosynthesis. Its function is as follows. Catalyzes cross-linking of the peptidoglycan cell wall at the division septum. This is Probable peptidoglycan D,D-transpeptidase FtsI (ftsI) from Caulobacter vibrioides (strain NA1000 / CB15N) (Caulobacter crescentus).